Here is a 400-residue protein sequence, read N- to C-terminus: Argininosuccinate synthase (400 aa).

10 to 18 (AFSGGLDTT) contacts ATP. Residue Tyr87 participates in L-citrulline binding. Gly117 contacts ATP. Residues Thr119, Asn123, and Asp124 each coordinate L-aspartate. Residue Asn123 coordinates L-citrulline. L-citrulline contacts are provided by Arg127, Ser173, Ser182, Glu255, and Tyr267.

It belongs to the argininosuccinate synthase family. Type 1 subfamily. Homotetramer.

It is found in the cytoplasm. It carries out the reaction L-citrulline + L-aspartate + ATP = 2-(N(omega)-L-arginino)succinate + AMP + diphosphate + H(+). It participates in amino-acid biosynthesis; L-arginine biosynthesis; L-arginine from L-ornithine and carbamoyl phosphate: step 2/3. The protein is Argininosuccinate synthase of Natronomonas pharaonis (strain ATCC 35678 / DSM 2160 / CIP 103997 / JCM 8858 / NBRC 14720 / NCIMB 2260 / Gabara) (Halobacterium pharaonis).